The chain runs to 371 residues: MRVKKLSLRNFRNYKEAQFIPHPSINIITGPNAQGKTNLLEAIYYSLRGCSFRAEKDRDVTNWESNHTVINTEVNLSSRLIKLQWKIQEGSKKLSLNGVERPRSELDLFGVVLFCPEDLSLIKGSPQERRHFLDYEVGTLSPGYSQLWRQYAKILSQRNSLLKEIRDHRSKQEVLEVWDEQLYRYGAKVIYLRLQVLKKLIPIARKTHFGLTGGTEELQAKYLSSLVLEPGLSEGQIYQVFSSSSKKIRQMELKRCQTLLGPHRDDLSLAINGVEAKTFGSQGQQRTVTLSLKLSQLDLWYHEFGEYPVLLLDDVLFELDRSRQNMLIDKILNKVQTFITTSFTGGIEETIKGAGLLWQVNAGSLTQKEEF.

30–37 (GPNAQGKT) contacts ATP.

This sequence belongs to the RecF family.

The protein resides in the cytoplasm. Its function is as follows. The RecF protein is involved in DNA metabolism; it is required for DNA replication and normal SOS inducibility. RecF binds preferentially to single-stranded, linear DNA. It also seems to bind ATP. The polypeptide is DNA replication and repair protein RecF (Desulforamulus reducens (strain ATCC BAA-1160 / DSM 100696 / MI-1) (Desulfotomaculum reducens)).